The primary structure comprises 348 residues: Propane 2-monooxygenase, reductase component (348 aa).

One can recognise a 2Fe-2S ferredoxin-type domain in the interval 5–95; that stretch reads HKINFEPVDI…DCTIELLNFD (91 aa). Cys-39, Cys-44, Cys-47, and Cys-79 together coordinate [2Fe-2S] cluster. An FAD-binding FR-type domain is found at 105–206; the sequence is IQDVRTEVLA…TGPYGSFTLK (102 aa).

It belongs to the bacterial ring-hydroxylating dioxygenase ferredoxin reductase family. As to quaternary structure, the propane 2-monooxygenase multicomponent enzyme system is composed of an electron transfer component and a monooxygenase component interacting with the effector protein MimD. The electron transfer component is composed of a reductase (MimB), and the monooxygenase component is formed by a large subunit (MimA) and a small subunit (MimC). FAD serves as cofactor. [2Fe-2S] cluster is required as a cofactor.

In terms of biological role, reductase component of the propane 2-monooxygenase multicomponent enzyme system which is involved in the degradation of propane via the O2-dependent hydroxylation of propane. Reductase catalyzes the transfer of electrons from NADH or NADPH to monooxygenase. The protein is Propane 2-monooxygenase, reductase component of Mycolicibacterium goodii (Mycobacterium goodii).